The chain runs to 118 residues: Small ribosomal subunit protein uS13 (118 aa).

The tract at residues arginine 92–lysine 118 is disordered.

This sequence belongs to the universal ribosomal protein uS13 family. As to quaternary structure, part of the 30S ribosomal subunit. Forms a loose heterodimer with protein S19. Forms two bridges to the 50S subunit in the 70S ribosome.

In terms of biological role, located at the top of the head of the 30S subunit, it contacts several helices of the 16S rRNA. In the 70S ribosome it contacts the 23S rRNA (bridge B1a) and protein L5 of the 50S subunit (bridge B1b), connecting the 2 subunits; these bridges are implicated in subunit movement. Contacts the tRNAs in the A and P-sites. In Pseudomonas putida (strain W619), this protein is Small ribosomal subunit protein uS13.